We begin with the raw amino-acid sequence, 276 residues long: Diaminopimelate epimerase (276 aa).

3 residues coordinate substrate: Asn-11, Gln-44, and Asn-64. Cys-73 functions as the Proton donor in the catalytic mechanism. Residues 74–75, Asn-157, Asn-190, and 208–209 each bind substrate; these read GN and ER. The active-site Proton acceptor is Cys-217. Position 218–219 (218–219) interacts with substrate; sequence GS.

The protein belongs to the diaminopimelate epimerase family. In terms of assembly, homodimer.

It is found in the cytoplasm. The enzyme catalyses (2S,6S)-2,6-diaminopimelate = meso-2,6-diaminopimelate. It functions in the pathway amino-acid biosynthesis; L-lysine biosynthesis via DAP pathway; DL-2,6-diaminopimelate from LL-2,6-diaminopimelate: step 1/1. In terms of biological role, catalyzes the stereoinversion of LL-2,6-diaminopimelate (L,L-DAP) to meso-diaminopimelate (meso-DAP), a precursor of L-lysine and an essential component of the bacterial peptidoglycan. The chain is Diaminopimelate epimerase from Blochmanniella floridana.